Here is a 406-residue protein sequence, read N- to C-terminus: MDQNGMEIPVTLIIKAPNQKYSDQTISCFLNWTVGKLKTHLSNVYPSKPLTKDQRLVYSGRLLPDHLQLKDILRKQDEYHMVHLVCTSRTPPSSPKSSTNRESHEALASNSNSSSDQSGSSTPSSSQETLTLATSSSSEGLRQRTLPQAQTDPAQSHQVPYVMQGNVDNQLPGQAVPAGFPVYPAFNPLQMLWWQQMYAHQYYMQYQAAVSAQATSNANPAQPAATQPLNLAHVPGEEPPPAPNLVAQENRPMNENVQMNAQGGPVLNEEDFNRDWLDWMYTFSRAAILLSIVYFYSSFSRFIMVMGAMLLVYLHQAGWFPFRQEGVQHQAPNNNAEVNNDVQNANNLELEEMERLMDDGLEDESGEDAGEDASAIQRPGLMASAWSFITTFFTSLIPEGPPQVAN.

Residues 10-89 (VTLIIKAPNQ…HMVHLVCTSR (80 aa)) form the Ubiquitin-like domain. The segment at 86–156 (CTSRTPPSSP…PQAQTDPAQS (71 aa)) is disordered. Composition is skewed to low complexity over residues 87-98 (TSRTPPSSPKSS) and 109-139 (SNSNSSSDQSGSSTPSSSQETLTLATSSSSE). Polar residues predominate over residues 145–156 (TLPQAQTDPAQS). A helical membrane pass occupies residues 302 to 322 (FIMVMGAMLLVYLHQAGWFPF).

It is found in the membrane. Its function is as follows. Could be involved in the unfolded protein response (UPR) pathway. The chain is Homocysteine-responsive endoplasmic reticulum-resident ubiquitin-like domain member 2 protein (HERPUD2) from Bos taurus (Bovine).